The following is a 525-amino-acid chain: Polyamine aminopropyltransferase 1 (525 aa).

A run of 6 helical transmembrane segments spans residues 21–41 (ALLVLAVFVVASCGLAYELIA), 53–73 (ILQFSSIIGAYLFAMGIGSWV), 89–109 (LELLVGLFGGVSAAALFLLFA), 117–137 (LVLYALVTVIGVLVGMEIPLV), 155–175 (VLTFDYLGALAVSLLFPLVLA), and 180–200 (LVRTGFLFGLCNTAIAVWTLW). The region spanning 220-464 (AGMVGAALLA…GEWGFILAAP (245 aa)) is the PABS domain. A spermidine synthase region spans residues 222–471 (MVGAALLAGF…AAPGRADFRP (250 aa)). Position 259 (Gln259) interacts with S-methyl-5'-thioadenosine. 2 residues coordinate spermidine: His289 and Asp313. Residues Asp333 and 367–368 (DA) contribute to the S-methyl-5'-thioadenosine site. Asp385 functions as the Proton acceptor in the catalytic mechanism.

It belongs to the spermidine/spermine synthase family. As to quaternary structure, homodimer or homotetramer.

The protein localises to the cell membrane. It catalyses the reaction S-adenosyl 3-(methylsulfanyl)propylamine + putrescine = S-methyl-5'-thioadenosine + spermidine + H(+). The protein operates within amine and polyamine biosynthesis; spermidine biosynthesis; spermidine from putrescine: step 1/1. Catalyzes the irreversible transfer of a propylamine group from the amino donor S-adenosylmethioninamine (decarboxy-AdoMet) to putrescine (1,4-diaminobutane) to yield spermidine. In Ralstonia nicotianae (strain ATCC BAA-1114 / GMI1000) (Ralstonia solanacearum), this protein is Polyamine aminopropyltransferase 1.